The primary structure comprises 324 residues: Methyltransferase pytC (324 aa).

This sequence belongs to the methyltransferase superfamily. LaeA methyltransferase family.

The protein operates within secondary metabolite biosynthesis. Its function is as follows. Methyltransferase; part of the gene cluster that mediates the biosynthesis of pyranterreones, a family of antioxidative compounds. The first step of pyranonigrins biosynthesis is performed by the hybrid PKS-NRPS synthetase pytA that condenses 4 malonyl-CoA units ato the acetyl starter unit by the modular PKS of pytA. The acyl chain is then connected to an L-serine through the amide bond by the modular NRPS of pytA. A tetramic acid is formed and released from the PKS-NRPS pytA to give pyranterreone 5 with the help of the thioesterase pytI. Pyranterreone 5 could be methylated by pytC to afford pyranterreone 6. Both pyranterreones 5 and 6 are subsequently oxidized by the FAD-linked oxidoreductase pytB and the cytochrome P450 monooxygenase pytD to form the fused gamma-pyrone core, resulting in pyranterreones 7 and 11, respectively. The hydroxy group at C-8 of pyranterreones 7 and 11 are dehydrated by the aspartyl protease pytH to form a delta-7 double bond to give pyranterreones 3 and 1, 2 accordingly. The exo-methylene of pyranterreone 3 could be reduced into a pendant methyl by reductase pytE to provide pyranterreone 4, also known as cordylactam. Pyranterreone 4 can be reconverted to pyranterreone 3 through pytB-catalyzed dehydrogenation or further oxidized to pyranterreones 9 and 10. This Aspergillus terreus (strain NIH 2624 / FGSC A1156) protein is Methyltransferase pytC.